The chain runs to 545 residues: T-complex protein 1 subunit gamma (545 aa).

Methionine 1 carries the N-acetylmethionine modification. The disordered stretch occupies residues 1–24; sequence MMGHRPVLVLSQNTKRESGRKVQS. A Phosphoserine modification is found at serine 11. Residue lysine 15 forms a Glycyl lysine isopeptide (Lys-Gly) (interchain with G-Cter in SUMO2) linkage. Glycine 42, glycine 94, threonine 95, threonine 96, serine 97, threonine 162, and lysine 163 together coordinate ADP. ATP-binding residues include glycine 42, glycine 94, threonine 95, and threonine 96. Phosphoserine is present on serine 170. Lysine 222 is subject to N6-acetyllysine. 2 positions are modified to phosphoserine: serine 243 and serine 244. Tyrosine 247 is modified (phosphotyrosine). Residues lysine 248 and lysine 249 each participate in a glycyl lysine isopeptide (Lys-Gly) (interchain with G-Cter in SUMO2) cross-link. Serine 252 carries the phosphoserine modification. The cysteines at positions 366 and 372 are disulfide-linked. Residue lysine 381 forms a Glycyl lysine isopeptide (Lys-Gly) (interchain with G-Cter in SUMO2) linkage. Residue glycine 411 participates in ADP binding. Glycine 411 lines the ATP pocket. Threonine 430 and threonine 459 each carry phosphothreonine. Glycine 482, glutamate 483, glutamate 497, and lysine 502 together coordinate ADP. Residue glycine 482 participates in ATP binding. Glutamate 497 contributes to the ATP binding site. Positions 526-545 are disordered; sequence HKKKGDDQSRQGGAPDAGQE.

The protein belongs to the TCP-1 chaperonin family. In terms of assembly, component of the chaperonin-containing T-complex (TRiC), a hexadecamer composed of two identical back-to-back stacked rings enclosing a protein folding chamber. Each ring is made up of eight different subunits: TCP1/CCT1, CCT2, CCT3, CCT4, CCT5, CCT6A/CCT6, CCT7, CCT8. Interacts with PACRG. Interacts with DNAAF4. Interacts with DLEC1.

The protein resides in the cytoplasm. The enzyme catalyses ATP + H2O = ADP + phosphate + H(+). Component of the chaperonin-containing T-complex (TRiC), a molecular chaperone complex that assists the folding of actin, tubulin and other proteins upon ATP hydrolysis. The TRiC complex mediates the folding of WRAP53/TCAB1, thereby regulating telomere maintenance. As part of the TRiC complex may play a role in the assembly of BBSome, a complex involved in ciliogenesis regulating transports vesicles to the cilia. The chain is T-complex protein 1 subunit gamma (CCT3) from Macaca fascicularis (Crab-eating macaque).